Reading from the N-terminus, the 211-residue chain is Urease accessory protein UreG (211 aa).

8–15 (GPVGSGKT) is a GTP binding site.

It belongs to the SIMIBI class G3E GTPase family. UreG subfamily. As to quaternary structure, homodimer. UreD, UreF and UreG form a complex that acts as a GTP-hydrolysis-dependent molecular chaperone, activating the urease apoprotein by helping to assemble the nickel containing metallocenter of UreC. The UreE protein probably delivers the nickel.

Its subcellular location is the cytoplasm. Facilitates the functional incorporation of the urease nickel metallocenter. This process requires GTP hydrolysis, probably effectuated by UreG. The protein is Urease accessory protein UreG of Metallosphaera sedula (strain ATCC 51363 / DSM 5348 / JCM 9185 / NBRC 15509 / TH2).